The chain runs to 326 residues: Glycine N(alpha)-acyltransferase (326 aa).

The protein belongs to the acetyltransferase family.

The catalysed reaction is a (3R)-hydroxyacyl-[ACP] + glycine = a lyso-glycine lipid + holo-[ACP] + H(+). It carries out the reaction (3R)-hydroxyhexadecanoyl-[ACP] + glycine = N-[(3R)-3-hydroxyhexadecanoyl]-glycine + holo-[ACP] + H(+). The protein operates within lipid metabolism. In terms of biological role, is involved in the production of glycine lipids (GL), which are phosphorus-free membrane lipids. Catalyzes the first step of GL biosynthesis, i.e. the N-acylation of glycine via addition of a 3-hydroxy fatty acyl group, to form a range of monoacylated glycine (also named lyso-glycine lipids or lyso-GL). As an example, catalyzes the production of commendamide, an N-acylated (3-OH C16:0) derivative of glycine with hemolytic activity and the ability to solubilize cholesterol micelles; this compound can also activate NF-kB through the G-protein coupled receptor GPCR G2A/132. This is Glycine N(alpha)-acyltransferase from Phocaeicola vulgatus (strain ATCC 8482 / DSM 1447 / JCM 5826 / CCUG 4940 / NBRC 14291 / NCTC 11154) (Bacteroides vulgatus).